Reading from the N-terminus, the 247-residue chain is Pulmonary surfactant-associated protein A (247 aa).

Positions 1 to 19 are cleaved as a signal peptide; the sequence is MWCSLALILILVTVSGIMC. N-linked (GlcNAc...) asparagine glycosylation occurs at Asn-20. One can recognise a Collagen-like domain in the interval 27 to 99; sequence GSPGIPGTPG…PGERGPPGLP (73 aa). 9 positions are modified to 4-hydroxyproline: Pro-29, Pro-32, Pro-35, Pro-41, Pro-53, Pro-56, Pro-62, Pro-66, and Pro-69. Positions 32-101 are disordered; the sequence is PGTPGSHGLP…ERGPPGLPAS (70 aa). Basic and acidic residues predominate over residues 41-50; that stretch reads PGRDGRDGVK. Residues 53-64 are compositionally biased toward pro residues; it reads PGPPGPMGPPGV. The span at 83-92 shows a compositional bias: basic and acidic residues; the sequence is ERGDKGDPGE. A C-type lectin domain is found at 131-247; the sequence is LAVGDKVFAT…LQSRLTICEF (117 aa). 2 cysteine pairs are disulfide-bonded: Cys-154-Cys-245 and Cys-223-Cys-237. An N-linked (GlcNAc...) asparagine glycan is attached at Asn-206. Residues Glu-214, Arg-216, Asn-233, and Asp-234 each contribute to the Ca(2+) site.

The protein belongs to the SFTPA family. In terms of assembly, oligomeric complex of 6 set of homotrimers.

It is found in the secreted. The protein localises to the extracellular space. Its subcellular location is the extracellular matrix. The protein resides in the surface film. Functionally, in presence of calcium ions, it binds to surfactant phospholipids and contributes to lower the surface tension at the air-liquid interface in the alveoli of the mammalian lung and is essential for normal respiration. Enhances the expression of MYO18A/SP-R210 on alveolar macrophages. The polypeptide is Pulmonary surfactant-associated protein A (SFTPA1) (Cavia porcellus (Guinea pig)).